The following is a 152-amino-acid chain: Transcriptional regulator MraZ (152 aa).

2 consecutive SpoVT-AbrB domains span residues 5 to 52 (ASAI…PLQE) and 81 to 124 (AHEC…DEAA).

Belongs to the MraZ family. In terms of assembly, forms oligomers.

It is found in the cytoplasm. It localises to the nucleoid. The sequence is that of Transcriptional regulator MraZ from Shewanella denitrificans (strain OS217 / ATCC BAA-1090 / DSM 15013).